The following is a 322-amino-acid chain: Aspartate carbamoyltransferase catalytic subunit (322 aa).

Positions 70 and 71 each coordinate carbamoyl phosphate. Lys-98 serves as a coordination point for L-aspartate. Residues Arg-120, His-150, and Gln-153 each contribute to the carbamoyl phosphate site. L-aspartate is bound by residues Arg-184 and Arg-239. Carbamoyl phosphate is bound by residues Gly-280 and Pro-281.

It belongs to the aspartate/ornithine carbamoyltransferase superfamily. ATCase family. Heterododecamer (2C3:3R2) of six catalytic PyrB chains organized as two trimers (C3), and six regulatory PyrI chains organized as three dimers (R2).

The enzyme catalyses carbamoyl phosphate + L-aspartate = N-carbamoyl-L-aspartate + phosphate + H(+). It participates in pyrimidine metabolism; UMP biosynthesis via de novo pathway; (S)-dihydroorotate from bicarbonate: step 2/3. Functionally, catalyzes the condensation of carbamoyl phosphate and aspartate to form carbamoyl aspartate and inorganic phosphate, the committed step in the de novo pyrimidine nucleotide biosynthesis pathway. This chain is Aspartate carbamoyltransferase catalytic subunit, found in Xylella fastidiosa (strain 9a5c).